The chain runs to 294 residues: 2-oxo-3-(phosphooxy)propyl 3-oxoalkanoate synthase (294 aa).

The protein belongs to the AfsA family.

The catalysed reaction is a medium-chain 3-oxoacyl-[ACP] + dihydroxyacetone phosphate = a (4-alkanoyl-5-oxo-2,5-dihydrofuran-3-yl)methyl phosphate + holo-[ACP] + H2O. Functionally, involved in the biosynthesis of virginiae butanolide (VB), a gamma-butyrolactone autoregulator that triggers the production of the streptogramin antibiotic virginiamycin. The polypeptide is 2-oxo-3-(phosphooxy)propyl 3-oxoalkanoate synthase (Streptomyces virginiae (Streptomyces cinnamonensis)).